The primary structure comprises 252 residues: Movement protein (252 aa).

The disordered stretch occupies residues Tyr222–Ser252.

This sequence belongs to the tobamovirus movement protein family.

In terms of biological role, transports viral genome to neighboring plant cells directly through plasmosdesmata, without any budding. The movement protein allows efficient cell to cell propagation, by bypassing the host cell wall barrier. Displays RNA-binding activity. The protein is Movement protein of Bidens pilosa (Hairy beggarticks).